We begin with the raw amino-acid sequence, 1625 residues long: Nonribosomal peptide synthetase aclP (1625 aa).

The Carrier 1 domain maps to 47 to 123; that stretch reads TTMNPSSQLL…ALFTDLLSSE (77 aa). Residue serine 84 is modified to O-(pantetheine 4'-phosphoryl)serine. Residues 127–157 form a disordered region; sequence IPIPDPSDDSDDLSNPSSSTGGSPRVATPIS. The segment at 286–567 is condensation 1; it reads ASSQSTVIWA…KYFQRALQLL (282 aa). The tract at residues 614–997 is adenylation; it reads FESAVSRNPM…GRTDRQIKLR (384 aa). The 76-residue stretch at 1096–1171 folds into the Carrier 2 domain; sequence SPMEKLVGDA…HLAAAIDSGL (76 aa). At serine 1131 the chain carries O-(pantetheine 4'-phosphoryl)serine. Positions 1195–1585 are condensation 2; that stretch reads EWWHKYQINE…LQARIPLALS (391 aa).

The protein belongs to the NRP synthetase family.

Its pathway is mycotoxin biosynthesis. Its function is as follows. Nonribosomal peptide synthetase; part of the gene cluster that mediates the biosynthesis of aspirochlorine (or antibiotic A30641), an unusual halogenated spiro compound with distinctive antifungal properties due to selective inhibition of protein biosynthesis, and which is also active against bacteria, viruses, and murine tumor cells. The non-ribosomal peptide synthetase (NRPS) aclP is responsible the formation of the diketopiperazine (DKP) core from the condensation of 2 phenylalanine residues. One Phe residue is tailored into chlorotyrosine by hydroxylation and chlorination, whereas the second Phe undergoes an unprecedented C-C bond cleavage to be converted into glycine. After formation of the DKP, sulfur is incorporated into the DKP by conjugation with glutathione by aclG, followed by its stepwise degradation to the thiol by aclI, aclJ and aclK, and the dithiol oxidation by aclT. In addition, oxygenases (aclB, aclC, aclL and aclO) and O-methyltransferases (aclM and aclU) act as tailoring enzymes to produce the intermediate dechloroaspirochlorine. Ultimately, chlorination of dechloroaspirochlorine by the halogenase aclH is the last step in the aspirochlorine pathway. This Aspergillus oryzae (strain ATCC 42149 / RIB 40) (Yellow koji mold) protein is Nonribosomal peptide synthetase aclP.